A 155-amino-acid chain; its full sequence is MKLHILAVGNKMPDWIKKGYTEYSQRMPKEAEMQLVEIKPEKRIGKKTEQLLQAESERIRIALPPGCHIVVLDESGKQATTVRLAELMTNWRESGRDVTFIIGGADGLHRDIKQIAHEKLALSTMTLPHGLARVLLAEQLYRAFSITRNHPYHRA.

S-adenosyl-L-methionine is bound by residues Leu72, Gly103, and 122–127; that span reads LSTMTL.

This sequence belongs to the RNA methyltransferase RlmH family. In terms of assembly, homodimer.

The protein localises to the cytoplasm. The catalysed reaction is pseudouridine(1915) in 23S rRNA + S-adenosyl-L-methionine = N(3)-methylpseudouridine(1915) in 23S rRNA + S-adenosyl-L-homocysteine + H(+). Functionally, specifically methylates the pseudouridine at position 1915 (m3Psi1915) in 23S rRNA. The protein is Ribosomal RNA large subunit methyltransferase H of Nitrosomonas eutropha (strain DSM 101675 / C91 / Nm57).